Consider the following 435-residue polypeptide: MGKQEVKTRNGERVAIVAGLRTPFARQSTEFSQVPAVDLGKMVVSEMLARTDIDPKLIEQVVFGQVVQMPEAPNIAREIVLGTGMNIHTDAYSVTRACATSFQAAVNVAESIMAGTIEIGIAGGADSSSVLPIGVSKKLAANLLALSKTKTLGQKLNILKSLSFKDLMPVPPAVAEYSTGLSMGQTAEQMAKTHGISRAEQDALAHRSHTLASQAWKEGKIQGEVMTAFPEPYKKWISEDNNVRHDSTLEGYAKLRPAFDRQYGSVTAANSTPLTDGGAAVMLMREGKAKELGMEILGYIRGYAFSAIGVEKDMLMGPTYATAKVLENTGLELSDLTLIDMHEAFAAQALANVKMFASDKFAQENLGRSKAIGEIDMDKFNVLGGSIAYGHPFAATGARMMTQTLRELKRRGGGIALNTACAAGGLGAAMILEVE.

Cys98 functions as the Acyl-thioester intermediate in the catalytic mechanism. Catalysis depends on proton acceptor residues His391 and Cys421.

This sequence belongs to the thiolase-like superfamily. Thiolase family. As to quaternary structure, heterotetramer of two alpha chains (FadJ) and two beta chains (FadI).

It localises to the cytoplasm. The catalysed reaction is an acyl-CoA + acetyl-CoA = a 3-oxoacyl-CoA + CoA. It participates in lipid metabolism; fatty acid beta-oxidation. In terms of biological role, catalyzes the final step of fatty acid oxidation in which acetyl-CoA is released and the CoA ester of a fatty acid two carbons shorter is formed. This chain is 3-ketoacyl-CoA thiolase, found in Vibrio parahaemolyticus serotype O3:K6 (strain RIMD 2210633).